The sequence spans 421 residues: UDP-N-acetylglucosamine 1-carboxyvinyltransferase (421 aa).

23-24 contributes to the phosphoenolpyruvate binding site; it reads KN. Arg-92 contacts UDP-N-acetyl-alpha-D-glucosamine. Residue Cys-116 is the Proton donor of the active site. 2-(S-cysteinyl)pyruvic acid O-phosphothioketal is present on Cys-116. UDP-N-acetyl-alpha-D-glucosamine-binding positions include 121-125, 161-164, Asp-306, and Ile-328; these read RPVDL and KVSV.

Belongs to the EPSP synthase family. MurA subfamily.

The protein resides in the cytoplasm. The catalysed reaction is phosphoenolpyruvate + UDP-N-acetyl-alpha-D-glucosamine = UDP-N-acetyl-3-O-(1-carboxyvinyl)-alpha-D-glucosamine + phosphate. Its pathway is cell wall biogenesis; peptidoglycan biosynthesis. Its function is as follows. Cell wall formation. Adds enolpyruvyl to UDP-N-acetylglucosamine. The sequence is that of UDP-N-acetylglucosamine 1-carboxyvinyltransferase from Vibrio vulnificus (strain CMCP6).